The chain runs to 417 residues: Gamma-glutamyl phosphate reductase (417 aa).

This sequence belongs to the gamma-glutamyl phosphate reductase family.

The protein localises to the cytoplasm. It carries out the reaction L-glutamate 5-semialdehyde + phosphate + NADP(+) = L-glutamyl 5-phosphate + NADPH + H(+). Its pathway is amino-acid biosynthesis; L-proline biosynthesis; L-glutamate 5-semialdehyde from L-glutamate: step 2/2. Its function is as follows. Catalyzes the NADPH-dependent reduction of L-glutamate 5-phosphate into L-glutamate 5-semialdehyde and phosphate. The product spontaneously undergoes cyclization to form 1-pyrroline-5-carboxylate. In Idiomarina loihiensis (strain ATCC BAA-735 / DSM 15497 / L2-TR), this protein is Gamma-glutamyl phosphate reductase.